Reading from the N-terminus, the 293-residue chain is 33 kDa chaperonin (293 aa).

Intrachain disulfides connect cysteine 239–cysteine 241 and cysteine 272–cysteine 275.

It belongs to the HSP33 family. In terms of processing, under oxidizing conditions two disulfide bonds are formed involving the reactive cysteines. Under reducing conditions zinc is bound to the reactive cysteines and the protein is inactive.

The protein localises to the cytoplasm. Its function is as follows. Redox regulated molecular chaperone. Protects both thermally unfolding and oxidatively damaged proteins from irreversible aggregation. Plays an important role in the bacterial defense system toward oxidative stress. This is 33 kDa chaperonin from Limosilactobacillus fermentum (strain NBRC 3956 / LMG 18251) (Lactobacillus fermentum).